A 66-amino-acid polypeptide reads, in one-letter code: Large ribosomal subunit protein bL33c (66 aa).

It belongs to the bacterial ribosomal protein bL33 family.

Its subcellular location is the plastid. The protein resides in the chloroplast. The polypeptide is Large ribosomal subunit protein bL33c (Nicotiana sylvestris (Wood tobacco)).